We begin with the raw amino-acid sequence, 390 residues long: Transforming growth factor beta-1 proprotein (390 aa).

Residues 1–29 (MPPSRLRLLPLLLPLLWLLVLAPGRPASG) form the signal peptide. A straightjacket domain region spans residues 30 to 74 (LSTCKTIDMELVKRKRIEAIRGQILSKLRLASPPSQGDVPPGPLP). The interval 75–271 (EAVLALYNST…ATPLERAQHL (197 aa)) is arm domain. N-linked (GlcNAc...) asparagine glycosylation is found at asparagine 82, asparagine 136, and asparagine 176. Positions 226-252 (DSKDNTLRVEINGIGPKRRGDLAAIHG) are bowtie tail. The short motif at 244-246 (RGD) is the Cell attachment site element. 4 cysteine pairs are disulfide-bonded: cysteine 285-cysteine 294, cysteine 293-cysteine 356, cysteine 322-cysteine 387, and cysteine 326-cysteine 389.

This sequence belongs to the TGF-beta family. In terms of assembly, homodimer; disulfide-linked. Interacts with the serine proteases, HTRA1 and HTRA3: the interaction with either inhibits TGFB1-mediated signaling and the HTRA protease activity is required for this inhibition. May interact with THSD4; this interaction may lead to sequestration by FBN1 microfibril assembly and attenuation of TGFB signaling. Interacts with CD109, DPT and ASPN. Interacts with EFEMP2. Interacts with TSKU; the interaction contributes to regulation of the hair cycle. Interacts with TGFBR3. Homodimer; disulfide-linked. Interacts with transforming growth factor beta-1 (TGF-beta-1) chain; interaction is non-covalent and maintains TGF-beta-1 in a latent state; each latency-associated peptide (LAP) monomer interacts with TGF-beta-1 in the other monomer. Interacts with LTBP1; leading to regulation of TGF-beta-1 activation. Interacts with LRRC32/GARP; leading to regulation of TGF-beta-1 activation on the surface of activated regulatory T-cells (Tregs). Interacts with LRRC33/NRROS; leading to regulation of TGF-beta-1 in macrophages and microglia. Interacts (via cell attachment site) with integrins ITGAV and ITGB6 (ITGAV:ITGB6), leading to release of the active TGF-beta-1. Interacts with NREP; the interaction results in a decrease in TGFB1 autoinduction. Interacts with HSP90AB1; inhibits latent TGFB1 activation. As to quaternary structure, homodimer; disulfide-linked. Interacts with TGF-beta receptors (TGFBR1 and TGFBR2), leading to signal transduction. Transforming growth factor beta-1 proprotein: The precursor proprotein is cleaved in the Golgi apparatus by FURIN to form Transforming growth factor beta-1 (TGF-beta-1) and Latency-associated peptide (LAP) chains, which remain non-covalently linked, rendering TGF-beta-1 inactive. Post-translationally, N-glycosylated. Deglycosylation leads to activation of Transforming growth factor beta-1 (TGF-beta-1); mechanisms triggering deglycosylation-driven activation of TGF-beta-1 are however unclear.

The protein resides in the secreted. Its subcellular location is the extracellular space. It localises to the extracellular matrix. Transforming growth factor beta-1 proprotein: Precursor of the Latency-associated peptide (LAP) and Transforming growth factor beta-1 (TGF-beta-1) chains, which constitute the regulatory and active subunit of TGF-beta-1, respectively. In terms of biological role, required to maintain the Transforming growth factor beta-1 (TGF-beta-1) chain in a latent state during storage in extracellular matrix. Associates non-covalently with TGF-beta-1 and regulates its activation via interaction with 'milieu molecules', such as LTBP1, LRRC32/GARP and LRRC33/NRROS, that control activation of TGF-beta-1. Interaction with LRRC33/NRROS regulates activation of TGF-beta-1 in macrophages and microglia. Interaction with LRRC32/GARP controls activation of TGF-beta-1 on the surface of activated regulatory T-cells (Tregs). Interaction with integrins (ITGAV:ITGB6 or ITGAV:ITGB8) results in distortion of the Latency-associated peptide chain and subsequent release of the active TGF-beta-1. Its function is as follows. Multifunctional protein that regulates the growth and differentiation of various cell types and is involved in various processes, such as normal development, immune function, microglia function and responses to neurodegeneration. Activation into mature form follows different steps: following cleavage of the proprotein in the Golgi apparatus, Latency-associated peptide (LAP) and Transforming growth factor beta-1 (TGF-beta-1) chains remain non-covalently linked rendering TGF-beta-1 inactive during storage in extracellular matrix. At the same time, LAP chain interacts with 'milieu molecules', such as LTBP1, LRRC32/GARP and LRRC33/NRROS that control activation of TGF-beta-1 and maintain it in a latent state during storage in extracellular milieus. TGF-beta-1 is released from LAP by integrins (ITGAV:ITGB6 or ITGAV:ITGB8): integrin-binding to LAP stabilizes an alternative conformation of the LAP bowtie tail and results in distortion of the LAP chain and subsequent release of the active TGF-beta-1. Once activated following release of LAP, TGF-beta-1 acts by binding to TGF-beta receptors (TGFBR1 and TGFBR2), which transduce signal. While expressed by many cells types, TGF-beta-1 only has a very localized range of action within cell environment thanks to fine regulation of its activation by Latency-associated peptide chain (LAP) and 'milieu molecules'. Plays an important role in bone remodeling: acts as a potent stimulator of osteoblastic bone formation, causing chemotaxis, proliferation and differentiation in committed osteoblasts. Can promote either T-helper 17 cells (Th17) or regulatory T-cells (Treg) lineage differentiation in a concentration-dependent manner. At high concentrations, leads to FOXP3-mediated suppression of RORC and down-regulation of IL-17 expression, favoring Treg cell development. At low concentrations in concert with IL-6 and IL-21, leads to expression of the IL-17 and IL-23 receptors, favoring differentiation to Th17 cells. Stimulates sustained production of collagen through the activation of CREB3L1 by regulated intramembrane proteolysis (RIP). Mediates SMAD2/3 activation by inducing its phosphorylation and subsequent translocation to the nucleus. Positively regulates odontoblastic differentiation in dental papilla cells, via promotion of IPO7-mediated translocation of phosphorylated SMAD2 to the nucleus and subsequent transcription of target genes. Can induce epithelial-to-mesenchymal transition (EMT) and cell migration in various cell types. The sequence is that of Transforming growth factor beta-1 proprotein (TGFB1) from Cavia porcellus (Guinea pig).